Here is a 104-residue protein sequence, read N- to C-terminus: Large ribosomal subunit protein bL21 (104 aa).

The protein belongs to the bacterial ribosomal protein bL21 family. Part of the 50S ribosomal subunit. Contacts protein L20.

In terms of biological role, this protein binds to 23S rRNA in the presence of protein L20. In Leptospira borgpetersenii serovar Hardjo-bovis (strain JB197), this protein is Large ribosomal subunit protein bL21.